The primary structure comprises 608 residues: UvrABC system protein C (608 aa).

Positions 13–91 (HDAGVYRMYD…IKTYQPRYNV (79 aa)) constitute a GIY-YIG domain. The UVR domain maps to 201-236 (QQVLEHLIHKMEQASLALDFEEAARIRDQIQAVRAV).

Belongs to the UvrC family. In terms of assembly, interacts with UvrB in an incision complex.

It localises to the cytoplasm. Functionally, the UvrABC repair system catalyzes the recognition and processing of DNA lesions. UvrC both incises the 5' and 3' sides of the lesion. The N-terminal half is responsible for the 3' incision and the C-terminal half is responsible for the 5' incision. In Pasteurella multocida (strain Pm70), this protein is UvrABC system protein C.